The chain runs to 438 residues: Thymidine phosphorylase (438 aa).

This sequence belongs to the thymidine/pyrimidine-nucleoside phosphorylase family. Homodimer.

The catalysed reaction is thymidine + phosphate = 2-deoxy-alpha-D-ribose 1-phosphate + thymine. Its pathway is pyrimidine metabolism; dTMP biosynthesis via salvage pathway; dTMP from thymine: step 1/2. Its function is as follows. The enzymes which catalyze the reversible phosphorolysis of pyrimidine nucleosides are involved in the degradation of these compounds and in their utilization as carbon and energy sources, or in the rescue of pyrimidine bases for nucleotide synthesis. The protein is Thymidine phosphorylase of Colwellia psychrerythraea (strain 34H / ATCC BAA-681) (Vibrio psychroerythus).